We begin with the raw amino-acid sequence, 471 residues long: Uronate isomerase (471 aa).

It belongs to the metallo-dependent hydrolases superfamily. Uronate isomerase family.

It carries out the reaction D-glucuronate = D-fructuronate. It catalyses the reaction aldehydo-D-galacturonate = keto-D-tagaturonate. It participates in carbohydrate metabolism; pentose and glucuronate interconversion. The sequence is that of Uronate isomerase from Xanthomonas campestris pv. campestris (strain B100).